The primary structure comprises 494 residues: Ubiquitin carboxyl-terminal hydrolase 14 (494 aa).

A Ubiquitin-like domain is found at 4–80 (YSVTVKWGKE…MMGSADALPE (77 aa)). Position 52 is a phosphothreonine (threonine 52). Positions 105–483 (CGLTNLGNTC…IAYVLLYGPR (379 aa)) constitute a USP domain. The Nucleophile role is filled by cysteine 114. Phosphoserine occurs at positions 143 and 148. A Phosphothreonine modification is found at threonine 235. Phosphoserine occurs at positions 237, 302, and 432. The active-site Proton acceptor is the histidine 435. Lysine 449 is subject to N6-acetyllysine.

The protein belongs to the peptidase C19 family. USP14/UBP6 subfamily. As to quaternary structure, homodimer (Potential). Associates with the 26S proteasome. Interacts with FANCC, CXCR4 and ERN1. Interacts with TRIM14; this interaction recruits USP14 to cleave ubiquitin chains of CGAS and KDM4D.

It localises to the cytoplasm. The protein resides in the cell membrane. It catalyses the reaction Thiol-dependent hydrolysis of ester, thioester, amide, peptide and isopeptide bonds formed by the C-terminal Gly of ubiquitin (a 76-residue protein attached to proteins as an intracellular targeting signal).. Functionally, proteasome-associated deubiquitinase which releases ubiquitin from the proteasome targeted ubiquitinated proteins. Ensures the regeneration of ubiquitin at the proteasome. Is a reversibly associated subunit of the proteasome and a large fraction of proteasome-free protein exists within the cell. Required for the degradation of the chemokine receptor CXCR4 which is critical for CXCL12-induced cell chemotaxis. Also serves as a physiological inhibitor of endoplasmic reticulum-associated degradation (ERAD) under the non-stressed condition by inhibiting the degradation of unfolded endoplasmic reticulum proteins via interaction with ERN1. Indispensable for synaptic development and function at neuromuscular junctions (NMJs). Plays a role in the innate immune defense against viruses by stabilizing the viral DNA sensor CGAS and thus inhibiting its autophagic degradation. Inhibits OPTN-mediated selective autophagic degradation of KDM4D and thereby negatively regulates H3K9me2 and H3K9me3. The protein is Ubiquitin carboxyl-terminal hydrolase 14 (USP14) of Homo sapiens (Human).